Consider the following 257-residue polypeptide: Dihydroorotate dehydrogenase B (NAD(+)), electron transfer subunit (257 aa).

The FAD-binding FR-type domain occupies 2–102 (IGRERMTVVS…LGPLGHGFPL (101 aa)). FAD contacts are provided by residues 53 to 56 (RPLS), 70 to 72 (IYR), and 77 to 78 (GT). The [2Fe-2S] cluster site is built by Cys-221, Cys-226, Cys-229, and Cys-244.

It belongs to the PyrK family. Heterotetramer of 2 PyrK and 2 PyrD type B subunits. [2Fe-2S] cluster serves as cofactor. Requires FAD as cofactor.

Its pathway is pyrimidine metabolism; UMP biosynthesis via de novo pathway; orotate from (S)-dihydroorotate (NAD(+) route): step 1/1. Its function is as follows. Responsible for channeling the electrons from the oxidation of dihydroorotate from the FMN redox center in the PyrD type B subunit to the ultimate electron acceptor NAD(+). This Geobacillus thermodenitrificans (strain NG80-2) protein is Dihydroorotate dehydrogenase B (NAD(+)), electron transfer subunit.